A 217-amino-acid chain; its full sequence is Protein-L-isoaspartate O-methyltransferase 2 (217 aa).

S64 is an active-site residue.

This sequence belongs to the methyltransferase superfamily. L-isoaspartyl/D-aspartyl protein methyltransferase family.

The protein localises to the cytoplasm. The catalysed reaction is [protein]-L-isoaspartate + S-adenosyl-L-methionine = [protein]-L-isoaspartate alpha-methyl ester + S-adenosyl-L-homocysteine. In terms of biological role, catalyzes the methyl esterification of L-isoaspartyl residues in peptides and proteins that result from spontaneous decomposition of normal L-aspartyl and L-asparaginyl residues. It plays a role in the repair and/or degradation of damaged proteins. This Rhodopseudomonas palustris (strain HaA2) protein is Protein-L-isoaspartate O-methyltransferase 2.